The primary structure comprises 98 residues: NADH-ubiquinone oxidoreductase chain 4L (98 aa).

3 consecutive transmembrane segments (helical) span residues 1 to 21, 29 to 49, and 61 to 81; these read MPPIYMNIILAFTLSLMGMLV, SLLCLEGMMLSLFILGTTMAL, and IVLLVFAACEAAVGLSLLVMV.

This sequence belongs to the complex I subunit 4L family. As to quaternary structure, core subunit of respiratory chain NADH dehydrogenase (Complex I) which is composed of 45 different subunits.

Its subcellular location is the mitochondrion inner membrane. It carries out the reaction a ubiquinone + NADH + 5 H(+)(in) = a ubiquinol + NAD(+) + 4 H(+)(out). Core subunit of the mitochondrial membrane respiratory chain NADH dehydrogenase (Complex I) which catalyzes electron transfer from NADH through the respiratory chain, using ubiquinone as an electron acceptor. Part of the enzyme membrane arm which is embedded in the lipid bilayer and involved in proton translocation. The protein is NADH-ubiquinone oxidoreductase chain 4L (MT-ND4L) of Orycteropus afer (Aardvark).